A 100-amino-acid chain; its full sequence is Replication restart protein PriB (100 aa).

Residues 1-99 form the SSB domain; the sequence is MGFNNLVSLA…LRIQNIQEYK (99 aa).

It belongs to the PriB family. Homodimer. Interacts with PriA and DnaT. Component of the replication restart primosome. Primosome assembly occurs via a 'hand-off' mechanism. PriA binds to replication forks, subsequently PriB then DnaT bind; DnaT then displaces ssDNA to generate the helicase loading substrate.

Its function is as follows. Involved in the restart of stalled replication forks, which reloads the replicative helicase on sites other than the origin of replication; the PriA-PriB pathway is the major replication restart pathway. During primosome assembly it facilitates complex formation between PriA and DnaT on DNA; stabilizes PriA on DNA. Stimulates the DNA unwinding activity of PriA helicase. The sequence is that of Replication restart protein PriB from Neisseria meningitidis serogroup A / serotype 4A (strain DSM 15465 / Z2491).